The sequence spans 212 residues: Fibrillarin-like rRNA/tRNA 2'-O-methyltransferase (212 aa).

S-adenosyl-L-methionine is bound by residues 73 to 74, 91 to 92, 116 to 117, and 136 to 139; these read TT, EI, DA, and DVAQ.

It belongs to the methyltransferase superfamily. Fibrillarin family. Interacts with nop5. Component of box C/D small ribonucleoprotein (sRNP) particles that contain rpl7ae, FlpA and nop5, plus a guide RNA.

Its function is as follows. Involved in pre-rRNA and tRNA processing. Utilizes the methyl donor S-adenosyl-L-methionine to catalyze the site-specific 2'-hydroxyl methylation of ribose moieties in rRNA and tRNA. Site specificity is provided by a guide RNA that base pairs with the substrate. Methylation occurs at a characteristic distance from the sequence involved in base pairing with the guide RNA. The polypeptide is Fibrillarin-like rRNA/tRNA 2'-O-methyltransferase (Methanothrix thermoacetophila (strain DSM 6194 / JCM 14653 / NBRC 101360 / PT) (Methanosaeta thermophila)).